Consider the following 72-residue polypeptide: Large ribosomal subunit protein bL31 (72 aa).

Positions 16, 18, 37, and 40 each coordinate Zn(2+).

This sequence belongs to the bacterial ribosomal protein bL31 family. Type A subfamily. Part of the 50S ribosomal subunit. Requires Zn(2+) as cofactor.

Functionally, binds the 23S rRNA. The chain is Large ribosomal subunit protein bL31 from Hahella chejuensis (strain KCTC 2396).